The chain runs to 67 residues: Large ribosomal subunit protein bL31 (67 aa).

The Zn(2+) site is built by C16, C18, C37, and C40.

It belongs to the bacterial ribosomal protein bL31 family. Type A subfamily. As to quaternary structure, part of the 50S ribosomal subunit. Zn(2+) serves as cofactor.

Functionally, binds the 23S rRNA. The chain is Large ribosomal subunit protein bL31 from Methylococcus capsulatus (strain ATCC 33009 / NCIMB 11132 / Bath).